The chain runs to 174 residues: Inactive signal peptidase IA (174 aa).

At 1 to 7 (MKKVVKY) the chain is on the cytoplasmic side. The helical transmembrane segment at 8–28 (LISLILAIIIVLFVQTFVIVG) threads the bilayer. Residues 29 to 174 (HVIPNNDMSP…FSKWTIQFKS (146 aa)) lie on the Extracellular side of the membrane.

The protein belongs to the peptidase S26 family.

It localises to the cell membrane. In terms of biological role, catalytically inactive. This is Inactive signal peptidase IA (spsA) from Staphylococcus aureus (strain Mu50 / ATCC 700699).